We begin with the raw amino-acid sequence, 214 residues long: Ribosomal RNA small subunit methyltransferase G (214 aa).

S-adenosyl-L-methionine-binding positions include G56, F61, 107-108 (IE), and R125.

It belongs to the methyltransferase superfamily. RNA methyltransferase RsmG family.

The protein localises to the cytoplasm. Specifically methylates the N7 position of a guanine in 16S rRNA. The protein is Ribosomal RNA small subunit methyltransferase G of Syntrophomonas wolfei subsp. wolfei (strain DSM 2245B / Goettingen).